The chain runs to 335 residues: Ferredoxin--NADP reductase (335 aa).

Asp-35, Gln-43, Tyr-48, Ala-88, Phe-122, Asp-287, and Ser-328 together coordinate FAD.

It belongs to the ferredoxin--NADP reductase type 2 family. In terms of assembly, homodimer. FAD serves as cofactor.

It carries out the reaction 2 reduced [2Fe-2S]-[ferredoxin] + NADP(+) + H(+) = 2 oxidized [2Fe-2S]-[ferredoxin] + NADPH. The protein is Ferredoxin--NADP reductase of Thermus thermophilus (strain ATCC BAA-163 / DSM 7039 / HB27).